Reading from the N-terminus, the 140-residue chain is Small ribosomal subunit protein uS12 (140 aa).

Asp-102 is subject to 3-methylthioaspartic acid. The disordered stretch occupies residues 121 to 140 (ANRQQSRSKYGAKKPKAAKK). Residues 130 to 140 (YGAKKPKAAKK) are compositionally biased toward basic residues.

It belongs to the universal ribosomal protein uS12 family. Part of the 30S ribosomal subunit. Contacts proteins S8 and S17. May interact with IF1 in the 30S initiation complex.

With S4 and S5 plays an important role in translational accuracy. In terms of biological role, interacts with and stabilizes bases of the 16S rRNA that are involved in tRNA selection in the A site and with the mRNA backbone. Located at the interface of the 30S and 50S subunits, it traverses the body of the 30S subunit contacting proteins on the other side and probably holding the rRNA structure together. The combined cluster of proteins S8, S12 and S17 appears to hold together the shoulder and platform of the 30S subunit. The polypeptide is Small ribosomal subunit protein uS12 (Alkaliphilus oremlandii (strain OhILAs) (Clostridium oremlandii (strain OhILAs))).